The chain runs to 543 residues: Ipecoside beta-D-glucosidase IpeGLU1 (543 aa).

Residues Q36, H140, 185–186 (NE), Y350, E422, W471, and F487 contribute to the a beta-D-glucoside site. The Proton donor role is filled by E186. The active-site Nucleophile is E422.

The protein belongs to the glycosyl hydrolase 1 family. As to expression, expressed in roots.

The protein localises to the cytoplasm. The protein resides in the cytosol. The catalysed reaction is deacetylipecoside + H2O = deacetylipecoside aglycone + D-glucose. The enzyme catalyses deacetylisoipecoside + H2O = deacetylisoipecoside aglycone + D-glucose. It carries out the reaction 6-O-methyldeacetylipecoside + H2O = 6-O-methyldeacetylipecoside aglycone + D-glucose. It catalyses the reaction 6-O-methyldeacetylisoipecoside + H2O = 6-O-methyldeacetylisoipecoside aglycone + D-glucose. The catalysed reaction is ipecoside + H2O = ipecoside aglycone + D-glucose. The enzyme catalyses 3alpha(S)-strictosidine + H2O = strictosidine aglycone + D-glucose. The protein operates within alkaloid biosynthesis. Its activity is regulated as follows. Inhibited by Cu(2+), Fe(2+) and Zn(2+). Functionally, beta-glucosidase involved in the biosynthesis of ipecac and benzylisoquinoline monoterpenoid-isoquinoline alkaloids natural products, starting by the condensation of dopamine and secologanin, and including emetine and cephaeline, drugs used both as anti-protozoal (e.g. treatment of ameobiasis) and as emetic agents. In response to pathogen and herbivore attack, triggers the release of toxic ipecoside aglycon to trigger defense responses. Catalyzes deglucosylation both on (1S)-diastereomer and (1R)-diastereomer substrates, including ipecoside, the main alkaloidal glucoside. Also active on N-deacetylisoipecoside, 6-O-methyl-N-deacetylisoipecoside, 6-O-methyl-N-deacetylipecoside and N-deacetylipecoside. The protein is Ipecoside beta-D-glucosidase IpeGLU1 of Carapichea ipecacuanha (Ipecac).